Consider the following 1099-residue polypeptide: SLIT-ROBO Rho GTPase-activating protein 3 (1099 aa).

Positions 19-314 (AQIKEIRTQL…AVDNLDSRSD (296 aa)) constitute an F-BAR domain. The stretch at 352 to 392 (QTELLMRYHQLQSRLATLKIENEEVRKTLDATMQTLQDMLT) forms a coiled coil. Residues 470–493 (GERAECGTTRPPCLPPKPQKMRRP) are disordered. The 189-residue stretch at 506 to 694 (GSMEAFIKDS…TIIIHHEAIF (189 aa)) folds into the Rho-GAP domain. One can recognise an SH3 domain in the interval 744–803 (VEQIEAIAKFDYVGRSPRELSFKKGASLLLYHRASEDWWEGRHNGVDGLIPHQYIVVQDM). Residues 809–820 (DSLSQKADSEAS) show a composition bias toward polar residues. A disordered region spans residues 809-846 (DSLSQKADSEASSGPLLDDKASSKNDLQSPTEHISDYG). Phosphoserine occurs at positions 817, 820, 821, 837, and 858. The interval 861-911 (AAIPRRRSGGDTHSPPRGLGPSIDTPPRAAACPSSPHKIPLSRGRIESPEK) is disordered. A coiled-coil region spans residues 952-987 (HKSLEAEALAEDIEKTMSTALHELRELERQNTVKQA). The residue at position 954 (Ser954) is a Phosphoserine. Disordered regions lie at residues 994 to 1014 (TLEP…SPLH) and 1045 to 1099 (ARLA…SGTM). The segment covering 1060-1074 (VRPVVQHRSSSSSSS) has biased composition (low complexity). A compositionally biased stretch (polar residues) spans 1089-1099 (PNSSSDKSGTM).

As to quaternary structure, homodimer. Forms a heterooligomer with SRGAP1 and SRGAP2 through its F-BAR domain. Interacts with WASF1. Probably interacts with ROBO1. Interacts with FASLG.

GTPase-activating protein for RAC1 and perhaps CDC42, but not for RhoA small GTPase. May attenuate RAC1 signaling in neurons. In Mus musculus (Mouse), this protein is SLIT-ROBO Rho GTPase-activating protein 3 (Srgap3).